Reading from the N-terminus, the 378-residue chain is Lipoyl synthase, mitochondrial (378 aa).

The [4Fe-4S] cluster site is built by Cys109, Cys114, Cys120, Cys140, Cys144, Cys147, and Ser356. Residues 125–345 (ETGTATATIM…QTLGMEMGFR (221 aa)) form the Radical SAM core domain.

It belongs to the radical SAM superfamily. Lipoyl synthase family. The cofactor is [4Fe-4S] cluster.

It localises to the mitochondrion. The enzyme catalyses [[Fe-S] cluster scaffold protein carrying a second [4Fe-4S](2+) cluster] + N(6)-octanoyl-L-lysyl-[protein] + 2 oxidized [2Fe-2S]-[ferredoxin] + 2 S-adenosyl-L-methionine + 4 H(+) = [[Fe-S] cluster scaffold protein] + N(6)-[(R)-dihydrolipoyl]-L-lysyl-[protein] + 4 Fe(3+) + 2 hydrogen sulfide + 2 5'-deoxyadenosine + 2 L-methionine + 2 reduced [2Fe-2S]-[ferredoxin]. It functions in the pathway protein modification; protein lipoylation via endogenous pathway; protein N(6)-(lipoyl)lysine from octanoyl-[acyl-carrier-protein]: step 2/2. Its function is as follows. Catalyzes the radical-mediated insertion of two sulfur atoms into the C-6 and C-8 positions of the octanoyl moiety bound to the lipoyl domains of lipoate-dependent enzymes, thereby converting the octanoylated domains into lipoylated derivatives. This Medicago truncatula (Barrel medic) protein is Lipoyl synthase, mitochondrial.